The following is a 114-amino-acid chain: Large ribosomal subunit protein uL22 (114 aa).

It belongs to the universal ribosomal protein uL22 family. In terms of assembly, part of the 50S ribosomal subunit.

Functionally, this protein binds specifically to 23S rRNA; its binding is stimulated by other ribosomal proteins, e.g. L4, L17, and L20. It is important during the early stages of 50S assembly. It makes multiple contacts with different domains of the 23S rRNA in the assembled 50S subunit and ribosome. The globular domain of the protein is located near the polypeptide exit tunnel on the outside of the subunit, while an extended beta-hairpin is found that lines the wall of the exit tunnel in the center of the 70S ribosome. This Mycoplasmopsis agalactiae (strain NCTC 10123 / CIP 59.7 / PG2) (Mycoplasma agalactiae) protein is Large ribosomal subunit protein uL22.